Consider the following 76-residue polypeptide: Omega-scoloptoxin(15)-Ssd3c (76 aa).

An N-terminal signal peptide occupies residues 1-23 (MEKKIIFLVVLVALLALPEFISS).

This sequence belongs to the scoloptoxin-15 family. Contains 2 disulfide bonds. Expressed by the venom gland.

It is found in the secreted. Its function is as follows. Voltage-gated calcium channel inhibitor (Cav) (8.6% block at 10 nM), when tested on DRG neurons. This chain is Omega-scoloptoxin(15)-Ssd3c, found in Scolopendra dehaani (Thai centipede).